The following is a 244-amino-acid chain: Ubiquinone/menaquinone biosynthesis C-methyltransferase UbiE (244 aa).

S-adenosyl-L-methionine contacts are provided by residues Thr70, Asp91, and 117–118 (DA).

Belongs to the class I-like SAM-binding methyltransferase superfamily. MenG/UbiE family.

It catalyses the reaction a 2-demethylmenaquinol + S-adenosyl-L-methionine = a menaquinol + S-adenosyl-L-homocysteine + H(+). The catalysed reaction is a 2-methoxy-6-(all-trans-polyprenyl)benzene-1,4-diol + S-adenosyl-L-methionine = a 5-methoxy-2-methyl-3-(all-trans-polyprenyl)benzene-1,4-diol + S-adenosyl-L-homocysteine + H(+). Its pathway is quinol/quinone metabolism; menaquinone biosynthesis; menaquinol from 1,4-dihydroxy-2-naphthoate: step 2/2. It functions in the pathway cofactor biosynthesis; ubiquinone biosynthesis. Its function is as follows. Methyltransferase required for the conversion of demethylmenaquinol (DMKH2) to menaquinol (MKH2) and the conversion of 2-polyprenyl-6-methoxy-1,4-benzoquinol (DDMQH2) to 2-polyprenyl-3-methyl-6-methoxy-1,4-benzoquinol (DMQH2). In Nitrosospira multiformis (strain ATCC 25196 / NCIMB 11849 / C 71), this protein is Ubiquinone/menaquinone biosynthesis C-methyltransferase UbiE.